The following is a 409-amino-acid chain: Failed axon connections homolog (409 aa).

The chain crosses the membrane as a helical span at residues Tyr-68 to Ile-88. A disordered region spans residues Asp-372 to Lys-409.

Belongs to the FAX family.

The protein resides in the membrane. Its function is as follows. May play a role in axonal development. This Homo sapiens (Human) protein is Failed axon connections homolog (FAXC).